A 361-amino-acid chain; its full sequence is Cysteine-rich with EGF-like domain protein 2-A (361 aa).

Residues 1–24 (MNGSRALHLSAWLLLCLLCSAAVA) form the signal peptide. The region spanning 134–176 (DCLACLGGSERPCHGNGFCNGDGTRSGDGLCRCEAEYTGPFCL) is the EGF-like 1 domain. Cystine bridges form between C138-C152, C146-C164, and C166-C175. A glycan (N-linked (GlcNAc...) asparagine) is linked at N188. 2 FU repeats span residues 191–238 (YSLC…EESP) and 251–298 (SFLC…SEQV). The EGF-like 2; calcium-binding domain maps to 288 to 329 (DVDECDASEQVCSRENETCLNTAGSYKCTCSEGFEDKEGNCV). 3 disulfides stabilise this stretch: C292/C306, C299/C315, and C317/C328. An N-linked (GlcNAc...) asparagine glycan is attached at N303. The segment at 341-361 (DGEMGTSASDINISNTAHEDL) is disordered. The span at 346–361 (TSASDINISNTAHEDL) shows a compositional bias: polar residues. The N-linked (GlcNAc...) asparagine glycan is linked to N352.

The protein belongs to the CRELD family.

The protein resides in the secreted. Its subcellular location is the endoplasmic reticulum. In terms of biological role, possible role in neuronal acetylcholine receptor transport. This chain is Cysteine-rich with EGF-like domain protein 2-A (creld2-a), found in Xenopus laevis (African clawed frog).